The primary structure comprises 265 residues: Tryptophan synthase alpha chain (265 aa).

Catalysis depends on proton acceptor residues glutamate 49 and aspartate 60.

This sequence belongs to the TrpA family. In terms of assembly, tetramer of two alpha and two beta chains.

The enzyme catalyses (1S,2R)-1-C-(indol-3-yl)glycerol 3-phosphate + L-serine = D-glyceraldehyde 3-phosphate + L-tryptophan + H2O. It functions in the pathway amino-acid biosynthesis; L-tryptophan biosynthesis; L-tryptophan from chorismate: step 5/5. In terms of biological role, the alpha subunit is responsible for the aldol cleavage of indoleglycerol phosphate to indole and glyceraldehyde 3-phosphate. In Paracoccus denitrificans (strain Pd 1222), this protein is Tryptophan synthase alpha chain.